Here is a 376-residue protein sequence, read N- to C-terminus: MDDDEQKGYTWEAGYAEGLNINDVLVEDEGGSIEKSIAKYVADSKRKARLTKRPERIRLGIMRHVMIVIDCSRFMTSKAMPPSRFVVVMKALQTFLDRFFEQNPIAQIGLITCKDRKADRLTMMTGNIRVLKESLNTLTEAFCGGDFSLQNALQLACANLKGMPGHVSREVVLVISALSTIDPGNIYSTIETMKRMNIRCSAIGLSAEMFVCKEMAKATKGEYSVALDPDHLQLLFSKHTLPPSSAKSSECNAIHVGFPHHELITTRSFCVCHPDTKPISSRGFICTQCGARHCSIPAECPVCKLTLVAAPQLARAFRHLQPLSAFEQIEVTRGFCYACETRLSGEGFRCGSCQLVFCLDCDTLLHESLHVCPGCN.

A VWFA domain is found at 64-206 (HVMIVIDCSR…NIRCSAIGLS (143 aa)). The C4-type zinc-finger motif lies at 286–303 (CTQCGARHCSIPAECPVC).

Belongs to the GTF2H2 family. Component of the 7-subunit TFIIH core complex composed of xpb-1, xpd-1, gtf-2H1, gtf-2H2C, gtf-2H3, Y73F8A.24 and gtf-2H5, which is active in NER. The core complex associates with the 3-subunit CDK-activating kinase (CAK) module composed of cyh-1, cdk-7 and mnat-1 to form the 10-subunit holoenzyme (holo-TFIIH) active in transcription.

The protein resides in the nucleus. In terms of biological role, component of the general transcription and DNA repair factor IIH (TFIIH) core complex, which is involved in general and transcription-coupled nucleotide excision repair (NER) of damaged DNA and, when complexed to CAK, in RNA transcription by RNA polymerase II. In NER, TFIIH acts by opening DNA around the lesion to allow the excision of the damaged oligonucleotide and its replacement by a new DNA fragment. In transcription, TFIIH has an essential role in transcription initiation. When the pre-initiation complex (PIC) has been established, TFIIH is required for promoter opening and promoter escape. Phosphorylation of the C-terminal tail (CTD) of the largest subunit of RNA polymerase II by the kinase module CAK controls the initiation of transcription. The sequence is that of General transcription factor IIH subunit 2 from Caenorhabditis elegans.